Reading from the N-terminus, the 124-residue chain is Large ribosomal subunit protein bL12 (124 aa).

It belongs to the bacterial ribosomal protein bL12 family. As to quaternary structure, homodimer. Part of the ribosomal stalk of the 50S ribosomal subunit. Forms a multimeric L10(L12)X complex, where L10 forms an elongated spine to which 2 to 4 L12 dimers bind in a sequential fashion. Binds GTP-bound translation factors.

In terms of biological role, forms part of the ribosomal stalk which helps the ribosome interact with GTP-bound translation factors. Is thus essential for accurate translation. The sequence is that of Large ribosomal subunit protein bL12 from Dehalococcoides mccartyi (strain ATCC BAA-2266 / KCTC 15142 / 195) (Dehalococcoides ethenogenes (strain 195)).